Consider the following 2258-residue polypeptide: Genome polyprotein 1 (2258 aa).

The region spanning 439–597 (SMAQEAKQWS…AVRRYEIKTV (159 aa)) is the Helicase ATP-binding domain. 487 to 494 (RAATVNVT) contacts ATP. The region spanning 612 to 778 (DKENSLYVLQ…GVQFYINEHF (167 aa)) is the Helicase C-terminal domain. Tyr1141 is modified (O-(5'-phospho-RNA)-tyrosine). One can recognise a Peptidase C4 domain in the interval 1257–1476 (ATLEGMTMKP…TKPRNMQSAP (220 aa)). Residues His1302, Asp1338, and Cys1405 each act as for nuclear inclusion protein A activity in the active site. The RdRp catalytic domain occupies 1745 to 1869 (WTHGSGDGSR…AMSPSFMVKF (125 aa)). Disordered stretches follow at residues 2027 to 2047 (NMAA…RGTS) and 2233 to 2258 (TSEQ…ALLR). The span at 2242–2258 (TETRRRNDYDGHEALLR) shows a compositional bias: basic and acidic residues.

The protein belongs to the bymoviruses polyprotein 1 family. In terms of processing, VPg is uridylylated by the polymerase and is covalently attached to the 5'-end of the genomic RNA. This uridylylated form acts as a nucleotide-peptide primer for the polymerase. Post-translationally, the viral RNA1 of bymoviruses is expressed as a single polyprotein which undergoes post-translational proteolytic processing by the main proteinase NIa-pro resulting in the production of at least eight individual proteins.

The protein localises to the host cytoplasmic vesicle. The protein resides in the virion. The catalysed reaction is RNA(n) + a ribonucleoside 5'-triphosphate = RNA(n+1) + diphosphate. The enzyme catalyses Hydrolyzes glutaminyl bonds, and activity is further restricted by preferences for the amino acids in P6 - P1' that vary with the species of potyvirus, e.g. Glu-Xaa-Xaa-Tyr-Xaa-Gln-|-(Ser or Gly) for the enzyme from tobacco etch virus. The natural substrate is the viral polyprotein, but other proteins and oligopeptides containing the appropriate consensus sequence are also cleaved.. Functionally, indispensable for virus replication. Its function is as follows. Mediates the cap-independent, EIF4E-dependent translation of viral genomic RNAs. Binds to the cap-binding site of host EIF4E and thus interferes with the host EIF4E-dependent mRNA export and translation. VPg-RNA directly binds EIF4E and is a template for transcription. Also forms trimeric complexes with EIF4E-EIF4G, which are templates for translation. In terms of biological role, has RNA-binding and proteolytic activities. An RNA-dependent RNA polymerase that plays an essential role in the virus replication. In Barley mild mosaic virus (strain Na1) (BaMMV), this protein is Genome polyprotein 1.